The sequence spans 473 residues: Glutamate--tRNA ligase 1 (473 aa).

The 'HIGH' region motif lies at 11-21 (PSPTGFLHIGG). The disordered stretch occupies residues 111-132 (REQARKEGRPPRYDGRWRDRAE). A 'KMSKS' region motif is present at residues 240-244 (KLSKR). Residue Lys243 participates in ATP binding.

Belongs to the class-I aminoacyl-tRNA synthetase family. Glutamate--tRNA ligase type 1 subfamily. Monomer.

The protein localises to the cytoplasm. It catalyses the reaction tRNA(Glu) + L-glutamate + ATP = L-glutamyl-tRNA(Glu) + AMP + diphosphate. Functionally, catalyzes the attachment of glutamate to tRNA(Glu) in a two-step reaction: glutamate is first activated by ATP to form Glu-AMP and then transferred to the acceptor end of tRNA(Glu). The polypeptide is Glutamate--tRNA ligase 1 (Beijerinckia indica subsp. indica (strain ATCC 9039 / DSM 1715 / NCIMB 8712)).